The sequence spans 470 residues: Angiopoietin-related protein 6 (470 aa).

The first 20 residues, 1–20, serve as a signal peptide directing secretion; the sequence is MGKPWLRALQLLLLLGASWA. N-linked (GlcNAc...) asparagine glycosylation is present at Asn58. Positions 59-116 form a coiled coil; sequence ASELAALRMRVGRHEELLRELQRLAAADGAVAGEVRALRKESRGLSARLGQLRAQLQH. An N-linked (GlcNAc...) (complex) asparagine glycan is attached at Asn145. The tract at residues 214-249 is disordered; the sequence is SDTSRMLDPAPEPQRDQTQRQQEPMASPMPAGHPAV. One can recognise a Fibrinogen C-terminal domain in the interval 251 to 469; sequence TKPVGPWQDC…KAAMLIRPLK (219 aa). 2 disulfide bridges follow: Cys260-Cys287 and Cys410-Cys423.

The protein localises to the secreted. May play a role in the wound healing process. May promote epidermal proliferation, remodeling and regeneration. May promote the chemotactic activity of endothelial cells and induce neovascularization. May counteract high-fat diet-induced obesity and related insulin resistance through increased energy expenditure. In Homo sapiens (Human), this protein is Angiopoietin-related protein 6 (ANGPTL6).